Here is a 201-residue protein sequence, read N- to C-terminus: 3-isopropylmalate dehydratase small subunit (201 aa).

Belongs to the LeuD family. LeuD type 1 subfamily. Heterodimer of LeuC and LeuD.

The catalysed reaction is (2R,3S)-3-isopropylmalate = (2S)-2-isopropylmalate. The protein operates within amino-acid biosynthesis; L-leucine biosynthesis; L-leucine from 3-methyl-2-oxobutanoate: step 2/4. Its function is as follows. Catalyzes the isomerization between 2-isopropylmalate and 3-isopropylmalate, via the formation of 2-isopropylmaleate. This chain is 3-isopropylmalate dehydratase small subunit, found in Rhodopseudomonas palustris (strain BisB18).